Reading from the N-terminus, the 576-residue chain is Cyclic nucleotide-binding domain-containing protein 2 (576 aa).

116–239 (SYRNYAEPLQ…DAQYRFEFFR (124 aa)) contributes to the a nucleoside 3',5'-cyclic phosphate binding site.

It localises to the cytoplasm. Its subcellular location is the cytosol. Functionally, essential for male fertility. Plays an important role in spermatogenesis and regulates sperm motility by controlling the development of the flagellar bending of sperm. This is Cyclic nucleotide-binding domain-containing protein 2 (CNBD2) from Homo sapiens (Human).